A 122-amino-acid chain; its full sequence is Small ribosomal subunit protein bS16 (122 aa).

Belongs to the bacterial ribosomal protein bS16 family.

The polypeptide is Small ribosomal subunit protein bS16 (Prochlorococcus marinus (strain MIT 9313)).